The sequence spans 194 residues: Glycerol-3-phosphate acyltransferase (194 aa).

5 helical membrane-spanning segments follow: residues 3-23, 47-67, 78-97, 112-132, and 153-173; these read IALL…LIVG, VLGK…GVLP, IHGI…PIYL, ILGV…TLLF, and LFFD…LIII.

This sequence belongs to the PlsY family. Probably interacts with PlsX.

It localises to the cell membrane. The catalysed reaction is an acyl phosphate + sn-glycerol 3-phosphate = a 1-acyl-sn-glycero-3-phosphate + phosphate. The protein operates within lipid metabolism; phospholipid metabolism. Catalyzes the transfer of an acyl group from acyl-phosphate (acyl-PO(4)) to glycerol-3-phosphate (G3P) to form lysophosphatidic acid (LPA). This enzyme utilizes acyl-phosphate as fatty acyl donor, but not acyl-CoA or acyl-ACP. In Macrococcus caseolyticus (strain JCSC5402) (Macrococcoides caseolyticum), this protein is Glycerol-3-phosphate acyltransferase.